We begin with the raw amino-acid sequence, 122 residues long: Large ribosomal subunit protein uL14 (122 aa).

This sequence belongs to the universal ribosomal protein uL14 family. Part of the 50S ribosomal subunit. Forms a cluster with proteins L3 and L19. In the 70S ribosome, L14 and L19 interact and together make contacts with the 16S rRNA in bridges B5 and B8.

Its function is as follows. Binds to 23S rRNA. Forms part of two intersubunit bridges in the 70S ribosome. In Chlorobaculum parvum (strain DSM 263 / NCIMB 8327) (Chlorobium vibrioforme subsp. thiosulfatophilum), this protein is Large ribosomal subunit protein uL14.